The chain runs to 366 residues: Ferredoxin--NADP reductase, leaf isozyme 2, chloroplastic (366 aa).

The transit peptide at 1–48 (MAAVNTVSSLPCSKAGAAVAGGAPRPSTCSVFYPPRCWSKRSSGNGVR) directs the protein to the chloroplast. Residues 87–209 (KEPYTGRCLL…TGPVGKEMLM (123 aa)) enclose the FAD-binding FR-type domain. FAD contacts are provided by residues 145-148 (RLYS), 166-168 (CVK), Tyr172, and 183-185 (VCS). Positions 148 and 168 each coordinate NADP(+). An intrachain disulfide couples Cys184 to Cys189. A Phosphoserine modification is found at Ser185. Thr216 bears the Phosphothreonine mark. Thr224 lines the FAD pocket. Residues Thr224, 256–257 (VP), 286–287 (SR), Lys296, 325–326 (GL), and Glu364 each bind NADP(+).

Belongs to the ferredoxin--NADP reductase type 1 family. In terms of assembly, heterodimer with LFNR1. Component of high molecular weight thylakoid LFNRs-containing protein complexes containing LIR1, LFNR1, LFNR2, TIC62 and TROL proteins. Interacts directly with LFNR1 and LFNR2; LIR1 increases the affinity of LFNR1 and LFNR2 for TIC62 and subsequent thylakoid relocalization. Requires FAD as cofactor. In terms of processing, may form interchain disulfide bonds with LIR1.

Its subcellular location is the plastid. It localises to the chloroplast stroma. The protein resides in the chloroplast thylakoid membrane. The enzyme catalyses 2 reduced [2Fe-2S]-[ferredoxin] + NADP(+) + H(+) = 2 oxidized [2Fe-2S]-[ferredoxin] + NADPH. It functions in the pathway energy metabolism; photosynthesis. Its function is as follows. Plays a key role in regulating the relative amounts of cyclic and non-cyclic electron flow to meet the demands of the plant for ATP and reducing power. In Oryza sativa subsp. indica (Rice), this protein is Ferredoxin--NADP reductase, leaf isozyme 2, chloroplastic.